Consider the following 208-residue polypeptide: Uracil phosphoribosyltransferase (208 aa).

5-phospho-alpha-D-ribose 1-diphosphate contacts are provided by residues R78, R103, and 130 to 138 (DPMLATGGS). Uracil is bound by residues I193 and 198 to 200 (GDA). D199 is a 5-phospho-alpha-D-ribose 1-diphosphate binding site.

Belongs to the UPRTase family. Mg(2+) is required as a cofactor.

The enzyme catalyses UMP + diphosphate = 5-phospho-alpha-D-ribose 1-diphosphate + uracil. It participates in pyrimidine metabolism; UMP biosynthesis via salvage pathway; UMP from uracil: step 1/1. Its activity is regulated as follows. Allosterically activated by GTP. Its function is as follows. Catalyzes the conversion of uracil and 5-phospho-alpha-D-ribose 1-diphosphate (PRPP) to UMP and diphosphate. This is Uracil phosphoribosyltransferase from Neisseria gonorrhoeae (strain ATCC 700825 / FA 1090).